Consider the following 206-residue polypeptide: Ras-related protein ralB-B (206 aa).

21 to 28 contributes to the GTP binding site; that stretch reads GSGGVGKS. Residues 43 to 51 carry the Effector region motif; it reads YEPTKADSY. Residues 68–72 and 128–131 each bind GTP; these read DTAGQ and NKSD. A compositionally biased stretch (basic and acidic residues) spans 180–189; it reads KMSENKDKNG. A disordered region spans residues 180 to 206; it reads KMSENKDKNGKKSGKSKKGFKQRCCLL. Positions 190–200 are enriched in basic residues; the sequence is KKSGKSKKGFK. Cysteine 203 is subject to Cysteine methyl ester. The S-geranylgeranyl cysteine moiety is linked to residue cysteine 203. A propeptide spans 204–206 (removed in mature form); the sequence is CLL.

Belongs to the small GTPase superfamily. Ras family. As to quaternary structure, interacts with ralbp1 and rap1gds1.

The protein resides in the cell membrane. The protein localises to the midbody. It catalyses the reaction GTP + H2O = GDP + phosphate + H(+). Multifunctional GTPase involved in a variety of cellular processes including gene expression, cell migration, cell proliferation, oncogenic transformation and membrane trafficking. Accomplishes its multiple functions by interacting with distinct downstream effectors. Acts as a GTP sensor for GTP-dependent exocytosis of dense core vesicles. Required both to stabilize the assembly of the exocyst complex and to localize functional exocyst complexes to the leading edge of migrating cells. Required for suppression of apoptosis. In late stages of cytokinesis, upon completion of the bridge formation between dividing cells, mediates exocyst recruitment to the midbody to drive abscission. Regulates the actin cytoskeleton to play a role in gastrulation or neurulation. During the cleavage stages, the GTP-bound form induces a cortical reaction that affects the localization of pigment granules. Activated by the FGF pathway via ras and ral-GDS, but independently of raf. Directs ralbp1 to the plasma membrane. Involved in ligand-dependent receptor mediated endocytosis of the EGF and insulin receptors. The polypeptide is Ras-related protein ralB-B (ralb-b) (Xenopus laevis (African clawed frog)).